The chain runs to 77 residues: Defensin-like protein 4 (77 aa).

A signal peptide spans 1–30 (MKFSMRLISAVLFLVMIFVATGMGPVTVEA). Cystine bridges form between Cys-33/Cys-77, Cys-44/Cys-64, Cys-50/Cys-71, and Cys-54/Cys-73.

It belongs to the DEFL family. Expressed in roots, siliques and seeds.

The protein localises to the secreted. Its function is as follows. Confers broad-spectrum resistance to pathogens. The polypeptide is Defensin-like protein 4 (PDF2.1) (Arabidopsis thaliana (Mouse-ear cress)).